The following is a 245-amino-acid chain: Uridylate kinase (245 aa).

Residue 18–21 coordinates ATP; that stretch reads KLSG. Glycine 60 is a UMP binding site. The ATP site is built by glycine 61 and arginine 65. UMP is bound by residues aspartate 80 and 141 to 148; that span reads TGNPFFTT. Threonine 168, tyrosine 174, and aspartate 177 together coordinate ATP.

The protein belongs to the UMP kinase family. In terms of assembly, homohexamer.

The protein resides in the cytoplasm. It carries out the reaction UMP + ATP = UDP + ADP. It functions in the pathway pyrimidine metabolism; CTP biosynthesis via de novo pathway; UDP from UMP (UMPK route): step 1/1. Inhibited by UTP. Catalyzes the reversible phosphorylation of UMP to UDP. In Pseudomonas paraeruginosa (strain DSM 24068 / PA7) (Pseudomonas aeruginosa (strain PA7)), this protein is Uridylate kinase.